We begin with the raw amino-acid sequence, 185 residues long: MKGKTAAGGGAICAIAVMITIVMGNGNVRTNQAGLELIGNAEGCRRDPYMCPAGVWTDGIGNTHGVTPGVRKTDQQIAADWEKNILIAERCINQHFRGKDMPDNAFSAMTSAAFNMGCNSLRTYYSKARGMRVETSIHKWAQKGEWVNMCNHLPDFVNSNGVPLRGLKIRREKERQLCLTGLVNE.

At 1–6 the chain is on the cytoplasmic side; it reads MKGKTA. Residues 7–24 traverse the membrane as a helical; Signal-anchor for type II membrane protein segment; sequence AGGGAICAIAVMITIVMG. Intrachain disulfides connect C13–C44 and C44–C51. The Periplasmic segment spans residues 25–185; that stretch reads NGNVRTNQAG…QLCLTGLVNE (161 aa). Active-site proton donor/acceptor residues include E42 and C51.

The protein belongs to the glycosyl hydrolase 24 family. All the periplasmic cyteines of the inactive, membrane-associated endolysin are involved in disulfide bond. In the active soluble form, disulfide bonds are isomerized and only the catalytic cysteine remains free.

It is found in the host cell inner membrane. The catalysed reaction is Hydrolysis of (1-&gt;4)-beta-linkages between N-acetylmuramic acid and N-acetyl-D-glucosamine residues in a peptidoglycan and between N-acetyl-D-glucosamine residues in chitodextrins.. Its function is as follows. Signal-arrest-release (SAR) endolysin with lysozyme activity that degrades host peptidoglycans and participates with the pinholin and spanin proteins in the sequential events which lead to programmed host cell lysis releasing the mature viral particles. Once the pinholin has permeabilized the host cell membrane, the SAR-endolysin is released into the periplasm where it breaks down the peptidoglycan layer. In Escherichia phage P1 (Bacteriophage P1), this protein is SAR-endolysin (17).